The primary structure comprises 1330 residues: Ubinuclein-2 (1330 aa).

A disordered region spans residues 1 to 113 (MAEPRRVAFI…PPPRPPKETV (113 aa)). The residue at position 13 (S13) is a Phosphoserine. Composition is skewed to basic and acidic residues over residues 16 to 31 (RRREADFAGAEREPPR) and 55 to 67 (ARDKPLPQREVSR). Residues 81-96 (PEPPPPPLPLQTPPPR) show a composition bias toward pro residues. T229 carries the phosphothreonine modification. The residue at position 236 (S236) is a Phosphoserine. 2 disordered regions span residues 236–304 (SDTE…KKRY) and 322–345 (DALKKESTPKVPVIPSTSSLPKPP). T238 carries the post-translational modification Phosphothreonine. K258 is covalently cross-linked (Glycyl lysine isopeptide (Lys-Gly) (interchain with G-Cter in SUMO2)). A Phosphoserine modification is found at S297. S402, S405, S408, and S570 each carry phosphoserine. Disordered stretches follow at residues 559-583 (LQADEEREKNGSDDDDDEKPGKRVI), 767-789 (NKGPSVSSRLNVPTTKPRPGLRE), 801-835 (LATPKKLDSPQTAHSSSLIAGHTGPVPKKPQDLAH), 866-909 (GLQR…SLTQ), 964-991 (YRLPLSTPSPGNGSQGSHPLVSRTAPST), 1021-1202 (PKLA…SSVV), and 1292-1330 (PGTQHAATLPHSPLPTHLQQAFNDGGQSKGDTKLPRKPQ). The segment covering 560–570 (QADEEREKNGS) has biased composition (basic and acidic residues). Polar residues-rich tracts occupy residues 767-780 (NKGPSVSSRLNVPT) and 809-818 (SPQTAHSSSL). Residues 866 to 895 (GLQRSSQIHASSSQTHVSSSQAQAAASSHA) show a composition bias toward low complexity. Composition is skewed to polar residues over residues 899-909 (SEAQDASSLTQ) and 969-980 (STPSPGNGSQGS). Over residues 1030–1044 (ATSPKPLTSPKPSVS) the composition is skewed to pro residues. Positions 1045-1056 (PKPSLSAKPSVS) are enriched in low complexity. Residue K1052 is modified to N6-acetyllysine. 3 stretches are compositionally biased toward polar residues: residues 1073–1148 (PSSS…NSLS), 1158–1169 (RGSNLNSSGANR), and 1308–1317 (HLQQAFNDGG). Phosphoserine is present on S1107. Residue K1132 is modified to N6-acetyllysine. The span at 1321 to 1330 (GDTKLPRKPQ) shows a compositional bias: basic and acidic residues.

Belongs to the ubinuclein family.

The sequence is that of Ubinuclein-2 (Ubn2) from Rattus norvegicus (Rat).